The primary structure comprises 184 residues: Lipocalin-15 (184 aa).

The signal sequence occupies residues 1 to 20 (MMSFLLGAILTLLWAPTAQA). Cys-83 and Cys-176 are disulfide-bonded.

It belongs to the calycin superfamily. Lipocalin family.

The protein resides in the secreted. The polypeptide is Lipocalin-15 (LCN15) (Homo sapiens (Human)).